A 350-amino-acid chain; its full sequence is Probable transposase-like protein At4g04430 (350 aa).

Disordered regions lie at residues 1–57 (MPSD…PSVN) and 307–328 (QIGQANPNEPPVSAAPEPQVAN). A compositionally biased stretch (low complexity) spans 30–43 (SGVQGSGSRSGSTV).

This sequence belongs to the transposase 24 family.

The protein is Probable transposase-like protein At4g04430 of Arabidopsis thaliana (Mouse-ear cress).